Reading from the N-terminus, the 120-residue chain is Large ribosomal subunit protein eL34 (120 aa).

It belongs to the eukaryotic ribosomal protein eL34 family.

This Pisum sativum (Garden pea) protein is Large ribosomal subunit protein eL34 (RPL34).